Reading from the N-terminus, the 1111-residue chain is Cell death abnormality protein 1 (1111 aa).

The first 18 residues, 1-18 (MRLILLVLLATWQVVVDT), serve as a signal peptide directing secretion. Topologically, residues 19 to 910 (RAPTFPDKLT…NGAGRSTGLT (892 aa)) are extracellular. Positions 41–113 (GDHVCTVKTI…QCCDGYYQTK (73 aa)) constitute an EMI domain. Cystine bridges form between Cys-45/Cys-106, Cys-71/Cys-80, Cys-105/Cys-117, Cys-121/Cys-130, Cys-125/Cys-136, Cys-138/Cys-147, Cys-160/Cys-172, Cys-166/Cys-179, Cys-181/Cys-190, Cys-203/Cys-215, Cys-209/Cys-221, Cys-223/Cys-232, Cys-245/Cys-257, Cys-251/Cys-264, and Cys-266/Cys-275. A glycan (N-linked (GlcNAc...) asparagine) is linked at Asn-66. EGF-like domains follow at residues 118 to 148 (LPDC…KYCA), 156 to 191 (WGLG…ERCE), 199 to 233 (WGPN…EFCL), and 241 to 276 (FGAE…ALCE). Residues Asn-333 and Asn-345 are each glycosylated (N-linked (GlcNAc...) asparagine). The 38-residue stretch at 421 to 458 (YGPNCEKQAMCDWNHASECNPETGSCVCKPGRTGKNCS) folds into the EGF-like 5 domain. 3 disulfide bridges follow: Cys-425–Cys-439, Cys-431–Cys-446, and Cys-448–Cys-457. Asn-456 carries an N-linked (GlcNAc...) asparagine glycan. An FU repeat occupies 629 to 680 (DQKCDPNTFGFLCQETVTPSPCASTDPKNGVCLSCPPGSSGIHCEHNCPAGS). Residues 681-716 (YGDGCQQVCSCADGHGCDPTTGECICEPGYHGKTCS) form the EGF-like 6 domain. 3 cysteine pairs are disulfide-bonded: Cys-685–Cys-697, Cys-691–Cys-704, and Cys-706–Cys-715. The helical transmembrane segment at 911-931 (WFFVLLIVALCGGLGLIALFY) threads the bilayer. The tract at residues 931–1007 (YRNKYQKEKD…EEELENKKIH (77 aa)) is interaction with trim-21. At 932-1111 (RNKYQKEKDP…KKRAQDNLYT (180 aa)) the chain is on the cytoplasmic side. Disordered stretches follow at residues 940–993 (DPDM…PNGL) and 1006–1111 (IHGR…NLYT). Positions 962–965 (NPLY) match the NPXY motif. A compositionally biased stretch (polar residues) spans 963–980 (PLYSRQSVFPDSDAFSSE). Phosphotyrosine; by SRC is present on Tyr-1019. The YXXL signature appears at 1019–1022 (YASL). Residues 1030 to 1039 (SSSSASASAS) are compositionally biased toward low complexity. The segment covering 1068-1083 (NSISPAHAVTTSNHNE) has biased composition (polar residues).

Interacts (via C-terminus) with ced-6 (via PTB domain). Interacts with nck-1; the interaction is required for ced-1 degradation through the proteasome pathway. Interacts with V-ATPase vha-10. Phosphorylation of Tyr-1019, within the YXXL motif, by src-1 is thought to initiate phagosomal formation. Post-translationally, 'Lys-48'-linked polyubiquitination by trim-21 leads to proteasomal degradation. In terms of tissue distribution, expressed in engulfing cells and syncytium hypodermal cells. Ced-7 is necessary for clustering around cell corpses prior to engulfment.

The protein localises to the cell membrane. It localises to the cytoplasmic vesicle. Its subcellular location is the phagosome membrane. Involved in programmed cell death, also called apoptosis, in both somatic and germ cells. Acts by recruiting ced-6 to phagosomes which enables actin-dependent cytoskeletal reorganization and subsequent engulfment of the apoptotic cell corpse. Has a role in the association of ppk-3 and rab-7 with the phagosomal surface which is necessary for the incorporation of lysosomes to phagosomes during phagosome maturation. Activates the expression of unfolded protein response genes, which are involved in the immune response to live bacteria. The chain is Cell death abnormality protein 1 from Caenorhabditis elegans.